The primary structure comprises 154 residues: Protein AE7-like 1 (154 aa).

This sequence belongs to the MIP18 family.

Its function is as follows. May play a role in chromosome segregation through establishment of sister chromatid cohesion. Unable to complement ae7 mutants, and thus probably not involved in the cytosolic iron-sulfur assembly (CIA) pathway. The sequence is that of Protein AE7-like 1 from Arabidopsis thaliana (Mouse-ear cress).